The primary structure comprises 131 residues: Monothiol glutaredoxin-S6 (131 aa).

In terms of domain architecture, Glutaredoxin spans 31-131 (SAFVQNAIYS…KLLGNSQSQR (101 aa)). Cys51 lines the [2Fe-2S] cluster pocket.

This sequence belongs to the glutaredoxin family. CPYC subfamily.

Its subcellular location is the cytoplasm. Functionally, may only reduce GSH-thiol disulfides, but not protein disulfides. The chain is Monothiol glutaredoxin-S6 (GRXS6) from Oryza sativa subsp. japonica (Rice).